Reading from the N-terminus, the 310-residue chain is 3,5-dioxohexanoate:acetyl-CoA acetone transferase (310 aa).

Zn(2+) contacts are provided by His-49, His-51, and Glu-258.

It belongs to the BKACE family. Zn(2+) serves as cofactor.

It catalyses the reaction 3,5-dioxohexanoate + acetyl-CoA = acetoacetyl-CoA + acetoacetate. Its function is as follows. Catalyzes the condensation of 3,5-dioxohexanoate and acetyl-CoA, forming acetoacetate and acetoacetyl-CoA. May be involved in fatty acid biosynthesis rescue via triacetic acid lactone. The polypeptide is 3,5-dioxohexanoate:acetyl-CoA acetone transferase (Paraburkholderia graminis (strain ATCC 700544 / DSM 17151 / LMG 18924 / NCIMB 13744 / C4D1M)).